We begin with the raw amino-acid sequence, 87 residues long: Olfactory receptor-like protein HbT2 (87 aa).

The Cytoplasmic portion of the chain corresponds to 1-8; the sequence is KLWRMTGT. Residues 9 to 29 traverse the membrane as a helical segment; that stretch reads WLGGFCHSIIQIPVIIQLPFC. At 30-55 the chain is on the extracellular side; it reads GPNVIDHYFRDLQPLFKLACTDTFME. The chain crosses the membrane as a helical span at residues 56–76; that stretch reads GVIVLAFSGLFSVFSFLILVS. Over 77-87 the chain is Cytoplasmic; sequence SYIVILVNLRN.

Belongs to the G-protein coupled receptor 1 family.

The protein localises to the cell membrane. In terms of biological role, odorant receptor. This Apis mellifera ligustica (Common honeybee) protein is Olfactory receptor-like protein HbT2.